A 147-amino-acid chain; its full sequence is Large ribosomal subunit protein bL9 (147 aa).

Belongs to the bacterial ribosomal protein bL9 family.

Binds to the 23S rRNA. The sequence is that of Large ribosomal subunit protein bL9 from Flavobacterium psychrophilum (strain ATCC 49511 / DSM 21280 / CIP 103535 / JIP02/86).